Here is a 138-residue protein sequence, read N- to C-terminus: Transcription antitermination protein NusB (138 aa).

Belongs to the NusB family.

In terms of biological role, involved in transcription antitermination. Required for transcription of ribosomal RNA (rRNA) genes. Binds specifically to the boxA antiterminator sequence of the ribosomal RNA (rrn) operons. This is Transcription antitermination protein NusB from Helicobacter acinonychis (strain Sheeba).